The primary structure comprises 90 residues: Bombyxin B-3 (90 aa).

Residues 1–20 (MMKTTIMFMLVVVISLTYSS) form the signal peptide. 3 cysteine pairs are disulfide-bonded: cysteine 30–cysteine 76, cysteine 42–cysteine 89, and cysteine 75–cysteine 80. Residues 49–67 (SGAQYAPYFWTRQYLGSRG) constitute a propeptide, c peptide like.

Belongs to the insulin family. In terms of assembly, heterodimer of a B chain and an A chain linked by two disulfide bonds.

It is found in the secreted. Brain peptide responsible for activation of prothoracic glands to produce ecdysone in insects. This is Bombyxin B-3 (BBXB3) from Bombyx mori (Silk moth).